The primary structure comprises 141 residues: Holo-[acyl-carrier-protein] synthase (141 aa).

Residues aspartate 8 and glutamate 61 each contribute to the Mg(2+) site.

This sequence belongs to the P-Pant transferase superfamily. AcpS family. Mg(2+) is required as a cofactor.

The protein resides in the cytoplasm. It carries out the reaction apo-[ACP] + CoA = holo-[ACP] + adenosine 3',5'-bisphosphate + H(+). Functionally, transfers the 4'-phosphopantetheine moiety from coenzyme A to a Ser of acyl-carrier-protein. The sequence is that of Holo-[acyl-carrier-protein] synthase from Rhodopseudomonas palustris (strain HaA2).